Consider the following 219-residue polypeptide: Proteasome subunit beta (219 aa).

The propeptide at 1 to 14 (MISNSEYHKEYMKG) is removed in mature form; by autocatalysis. The active-site Nucleophile is Thr-15.

The protein belongs to the peptidase T1B family. As to quaternary structure, the 20S proteasome core is composed of 14 alpha and 14 beta subunits that assemble into four stacked heptameric rings, resulting in a barrel-shaped structure. The two inner rings, each composed of seven catalytic beta subunits, are sandwiched by two outer rings, each composed of seven alpha subunits. The catalytic chamber with the active sites is on the inside of the barrel. Has a gated structure, the ends of the cylinder being occluded by the N-termini of the alpha-subunits. Is capped at one or both ends by the proteasome regulatory ATPase, PAN.

It localises to the cytoplasm. It carries out the reaction Cleavage of peptide bonds with very broad specificity.. The formation of the proteasomal ATPase PAN-20S proteasome complex, via the docking of the C-termini of PAN into the intersubunit pockets in the alpha-rings, triggers opening of the gate for substrate entry. Interconversion between the open-gate and close-gate conformations leads to a dynamic regulation of the 20S proteasome proteolysis activity. Functionally, component of the proteasome core, a large protease complex with broad specificity involved in protein degradation. In Methanococcus maripaludis (strain C6 / ATCC BAA-1332), this protein is Proteasome subunit beta.